The following is a 306-amino-acid chain: Small ribosomal subunit protein uS2 (306 aa).

S2 carries the post-translational modification N-acetylserine. Laminin-binding stretches follow at residues 161 to 180 and 205 to 229; these read IPCNNKGAHSVGLMWWMLAR and RDPEEIEKEEQAAAEKATTKEEYQG. 5 [DE]-W-[ST] repeats span residues 230 to 232, 245 to 247, 276 to 278, 286 to 288, and 304 to 306; these read EWT, DWS, and EWS. Residues 242 to 306 are laminin-binding; that stretch reads EVADWSEGVQ…EWTGTTTEWS (65 aa). Residues 261–306 are disordered; it reads PAERPEIPAAKPAAEDWSSQPASTDDWSAAPTAQASEWTGTTTEWS. Polar residues predominate over residues 277-306; that stretch reads WSSQPASTDDWSAAPTAQASEWTGTTTEWS.

The protein belongs to the universal ribosomal protein uS2 family. As to quaternary structure, monomer (37LRP) and homodimer (67LR). Component of the small ribosomal subunit. Mature ribosomes consist of a small (40S) and a large (60S) subunit. The 40S subunit contains about 33 different proteins and 1 molecule of RNA (18S). The 60S subunit contains about 49 different proteins and 3 molecules of RNA (28S, 5.8S and 5S). Interacts with rps21. Interacts with several laminins including at least lamb1. Interacts with mdk. Acylated. Acylation may be a prerequisite for conversion of the monomeric 37 kDa laminin receptor precursor (37LRP) to the mature dimeric 67 kDa laminin receptor (67LR), and may provide a mechanism for membrane association. In terms of processing, cleaved by stromelysin-3 (ST3) at the cell surface. Cleavage by stromelysin-3 may be a mechanism to alter cell-extracellular matrix interactions.

The protein localises to the cell membrane. Its subcellular location is the cytoplasm. The protein resides in the nucleus. Functionally, required for the assembly and/or stability of the 40S ribosomal subunit. Required for the processing of the 20S rRNA-precursor to mature 18S rRNA in a late step of the maturation of 40S ribosomal subunits. Also functions as a cell surface receptor for laminin. Plays a role in cell adhesion to the basement membrane and in the consequent activation of signaling transduction pathways. May play a role in cell fate determination and tissue morphogenesis. The sequence is that of Small ribosomal subunit protein uS2 (rpsa) from Xenopus tropicalis (Western clawed frog).